The primary structure comprises 170 residues: Zinc finger protein 576 (170 aa).

Residues 1–29 (MEDPNPEENMKQQDSPKERSPQSPGGNIC) form a disordered region. Positions 8 to 20 (ENMKQQDSPKERS) are enriched in basic and acidic residues. 4 consecutive C2H2-type zinc fingers follow at residues 34–57 (PKCTRCLITFADSKFQERHMKREH), 71–93 (FICFTCARSFPSSKALITHQRSH), 112–134 (FPCPDCGKTFGQAVSLRRHRQMH), and 143–165 (FACTECGQDFAQEAGLHQHYIRH).

Belongs to the krueppel C2H2-type zinc-finger protein family.

The protein localises to the nucleus. Its function is as follows. May be involved in transcriptional regulation. In Homo sapiens (Human), this protein is Zinc finger protein 576 (ZNF576).